The primary structure comprises 127 residues: MIKKNWITTGTEARALAQNISMSAYKARRVIDQIRGRSYEETIMILELMPYRASFPILKLVYSAAANAINNMGLSEADLFISKAEVNGGTFVKKLRPRARGRSYAIKRPTCHITIVLKDKDKSLLNE.

The protein belongs to the universal ribosomal protein uL22 family. In terms of assembly, part of the 50S ribosomal subunit.

Its subcellular location is the plastid. It is found in the chloroplast. In terms of biological role, this protein binds specifically to 23S rRNA. Its function is as follows. The globular domain of the protein is located near the polypeptide exit tunnel on the outside of the subunit, while an extended beta-hairpin is found that lines the wall of the exit tunnel in the center of the 70S ribosome. The protein is Large ribosomal subunit protein uL22c (rpl22) of Acorus calamus var. americanus (American sweet flag).